Here is a 156-residue protein sequence, read N- to C-terminus: Small ribosomal subunit protein uS7 (156 aa).

It belongs to the universal ribosomal protein uS7 family. Part of the 30S ribosomal subunit. Contacts proteins S9 and S11.

In terms of biological role, one of the primary rRNA binding proteins, it binds directly to 16S rRNA where it nucleates assembly of the head domain of the 30S subunit. Is located at the subunit interface close to the decoding center, probably blocks exit of the E-site tRNA. In Myxococcus xanthus (strain DK1622), this protein is Small ribosomal subunit protein uS7.